A 122-amino-acid chain; its full sequence is Large ribosomal subunit protein uL14 (122 aa).

The protein belongs to the universal ribosomal protein uL14 family. As to quaternary structure, part of the 50S ribosomal subunit. Forms a cluster with proteins L3 and L19. In the 70S ribosome, L14 and L19 interact and together make contacts with the 16S rRNA in bridges B5 and B8.

Functionally, binds to 23S rRNA. Forms part of two intersubunit bridges in the 70S ribosome. In Polynucleobacter necessarius subsp. necessarius (strain STIR1), this protein is Large ribosomal subunit protein uL14.